We begin with the raw amino-acid sequence, 1594 residues long: Transcription factor Gibbin (1594 aa).

Disordered regions lie at residues 19-111 (PDYL…RHWD), 149-241 (LRLS…LADA), 256-307 (QLLE…DPLG), and 367-464 (CSPH…RKGK). Pro residues predominate over residues 30-47 (GGPPTPRPLLPTRPPASP). Residue Lys-79 is modified to N6-acetyllysine. Over residues 165-177 (SFFSSPSLANSIR) the composition is skewed to polar residues. Positions 178-193 (SPEERANPHTKSERPS) are enriched in basic and acidic residues. Positions 228 to 240 (PEPDGPDYSELAD) are enriched in acidic residues. At Ser-267 the chain carries Phosphoserine. A compositionally biased stretch (low complexity) spans 272–303 (PQLLDPQPRFLDPQALEPLGEGLELPPLQPLA). Residues 391 to 401 (ILCRRRKAGRG) show a composition bias toward basic residues. Positions 395-407 (RRKAGRGRKADSG) form a DNA-binding region, a.T hook 1. The span at 427 to 447 (EPPPLPPPPPPTLSGPGPVPE) shows a compositional bias: pro residues. The a.T hook 2 DNA-binding region spans 541-553 (KRKRGRPPKNLLL). Positions 578 to 604 (MPEVKKRRRRKQKLASPQPSYAADAND) are disordered. Phosphoserine is present on Ser-593. Lys-606 participates in a covalent cross-link: Glycyl lysine isopeptide (Lys-Gly) (interchain with G-Cter in SUMO2). The disordered stretch occupies residues 714 to 789 (LTELGHPRKR…PGGQAGRNCG (76 aa)). Residues 734–743 (KPKRKRRSRK) are compositionally biased toward basic residues. Residues Ser-825 and Ser-842 each carry the phosphoserine modification. An Omega-N-methylarginine modification is found at Arg-887. Ser-892 is subject to Phosphoserine. Residues 942–967 (KLAPPPSAVARSPTTHPPANTYPPQY) are disordered. Ser-1060 is subject to Phosphoserine. Disordered regions lie at residues 1152 to 1191 (VSET…QSSL) and 1245 to 1306 (STSA…PDLG). Low complexity-rich tracts occupy residues 1153–1168 (SETF…QFSQ), 1180–1191 (SEASSSEGQSSL), and 1245–1264 (STSA…PRQP). Ser-1180 carries the post-translational modification Phosphoserine. Ser-1315, Ser-1317, and Ser-1392 each carry phosphoserine. Thr-1394 bears the Phosphothreonine mark. Position 1396 is a phosphoserine (Ser-1396). Lys-1402 participates in a covalent cross-link: Glycyl lysine isopeptide (Lys-Gly) (interchain with G-Cter in SUMO2). The segment at 1495-1525 (HLASPPATPKADKEPLEMARPPGPPRGPAAA) is disordered. A phosphoserine mark is found at Ser-1498 and Ser-1540.

The protein localises to the nucleus. It is found in the chromosome. In terms of biological role, transcription factor required for the proper patterning of the epidermis, which plays a key role in early epithelial morphogenesis. Directly binds promoter and enhancer regions and acts by maintaining local enhancer-promoter chromatin architecture. Interacts with many sequence-specific zinc-finger transcription factors and methyl-CpG-binding proteins to regulate the expression of mesoderm genes that wire surface ectoderm stratification. This is Transcription factor Gibbin from Mus musculus (Mouse).